We begin with the raw amino-acid sequence, 753 residues long: Nigerose phosphorylase (753 aa).

348 to 349 is a substrate binding site; that stretch reads WD. Glu-490 (proton donor) is an active-site residue. 604–605 is a substrate binding site; the sequence is KQ.

Belongs to the glycosyl hydrolase 65 family. Homodimer.

The protein resides in the cytoplasm. It carries out the reaction nigerose + phosphate = beta-D-glucose 1-phosphate + D-glucose. Its activity is regulated as follows. Does not require divalent metal ions. Its function is as follows. Catalyzes the reversible phosphorolysis of nigerose. Also shows a weak activity on kojibiose. In Lachnoclostridium phytofermentans (strain ATCC 700394 / DSM 18823 / ISDg) (Clostridium phytofermentans), this protein is Nigerose phosphorylase.